Here is a 353-residue protein sequence, read N- to C-terminus: Holliday junction branch migration complex subunit RuvB (353 aa).

Positions 4 to 185 (ADRLITAAGG…FGIVQRLEFY (182 aa)) are large ATPase domain (RuvB-L). Residues Ile24, Arg25, Gly66, Lys69, Thr70, Thr71, 132–134 (EDF), Arg175, Tyr185, and Arg222 contribute to the ATP site. A Mg(2+)-binding site is contributed by Thr70. Residues 186 to 256 (NIADLSTIVS…TADKALNLLD (71 aa)) are small ATPAse domain (RuvB-S). Positions 259–353 (EHGFDHQDRR…DDVVDDPADL (95 aa)) are head domain (RuvB-H). Residues Arg295, Arg314, and Arg319 each coordinate DNA.

The protein belongs to the RuvB family. In terms of assembly, homohexamer. Forms an RuvA(8)-RuvB(12)-Holliday junction (HJ) complex. HJ DNA is sandwiched between 2 RuvA tetramers; dsDNA enters through RuvA and exits via RuvB. An RuvB hexamer assembles on each DNA strand where it exits the tetramer. Each RuvB hexamer is contacted by two RuvA subunits (via domain III) on 2 adjacent RuvB subunits; this complex drives branch migration. In the full resolvosome a probable DNA-RuvA(4)-RuvB(12)-RuvC(2) complex forms which resolves the HJ.

Its subcellular location is the cytoplasm. The enzyme catalyses ATP + H2O = ADP + phosphate + H(+). Functionally, the RuvA-RuvB-RuvC complex processes Holliday junction (HJ) DNA during genetic recombination and DNA repair, while the RuvA-RuvB complex plays an important role in the rescue of blocked DNA replication forks via replication fork reversal (RFR). RuvA specifically binds to HJ cruciform DNA, conferring on it an open structure. The RuvB hexamer acts as an ATP-dependent pump, pulling dsDNA into and through the RuvAB complex. RuvB forms 2 homohexamers on either side of HJ DNA bound by 1 or 2 RuvA tetramers; 4 subunits per hexamer contact DNA at a time. Coordinated motions by a converter formed by DNA-disengaged RuvB subunits stimulates ATP hydrolysis and nucleotide exchange. Immobilization of the converter enables RuvB to convert the ATP-contained energy into a lever motion, pulling 2 nucleotides of DNA out of the RuvA tetramer per ATP hydrolyzed, thus driving DNA branch migration. The RuvB motors rotate together with the DNA substrate, which together with the progressing nucleotide cycle form the mechanistic basis for DNA recombination by continuous HJ branch migration. Branch migration allows RuvC to scan DNA until it finds its consensus sequence, where it cleaves and resolves cruciform DNA. This chain is Holliday junction branch migration complex subunit RuvB, found in Pseudomonas savastanoi pv. phaseolicola (strain 1448A / Race 6) (Pseudomonas syringae pv. phaseolicola (strain 1448A / Race 6)).